Reading from the N-terminus, the 109-residue chain is EEVSNGQEHTEGMXQGEXNXIXVEEHHEGEKNSHLVGKDEEKKLFVGALSEHFSKYGEIEGINIKVDPVTGRAGEHVINSKAYFGQFGNIVEVELFDKTKARGTRGGQR.

The disordered stretch occupies residues 1 to 36 (EEVSNGQEHTEGMXQGEXNXIXVEEHHEGEKNSHLV). Basic and acidic residues predominate over residues 23-36 (VEEHHEGEKNSHLV). Positions 40–50 (EEKKLFVGALS) constitute an RRM domain. Asymmetric dimethylarginine occurs at positions 102 and 105.

It localises to the cytoplasm. Its subcellular location is the nucleus. The sequence is that of Heterogeneous nuclear ribonucleoprotein-like protein HD40 from Artemia salina (Brine shrimp).